The following is a 550-amino-acid chain: CTP synthase (550 aa).

Residues 1 to 270 (MTKYVFVTGG…DRIICEELKL (270 aa)) form an amidoligase domain region. CTP is bound at residue serine 13. Serine 13 is a UTP binding site. Residues 14–19 (SLGKGI) and aspartate 71 each bind ATP. Positions 71 and 144 each coordinate Mg(2+). Residues 151-153 (DIE), 191-196 (KTKPTQ), and lysine 227 each bind CTP. Residues 191-196 (KTKPTQ) and lysine 227 contribute to the UTP site. One can recognise a Glutamine amidotransferase type-1 domain in the interval 295–547 (TIGMVGKYVD…VEAALANKQA (253 aa)). Glycine 356 provides a ligand contact to L-glutamine. Cysteine 383 functions as the Nucleophile; for glutamine hydrolysis in the catalytic mechanism. Residues 384 to 387 (LGMQ), glutamate 407, and arginine 473 each bind L-glutamine. Catalysis depends on residues histidine 520 and glutamate 522.

It belongs to the CTP synthase family. Homotetramer.

It carries out the reaction UTP + L-glutamine + ATP + H2O = CTP + L-glutamate + ADP + phosphate + 2 H(+). The enzyme catalyses L-glutamine + H2O = L-glutamate + NH4(+). It catalyses the reaction UTP + NH4(+) + ATP = CTP + ADP + phosphate + 2 H(+). It participates in pyrimidine metabolism; CTP biosynthesis via de novo pathway; CTP from UDP: step 2/2. Allosterically activated by GTP, when glutamine is the substrate; GTP has no effect on the reaction when ammonia is the substrate. The allosteric effector GTP functions by stabilizing the protein conformation that binds the tetrahedral intermediate(s) formed during glutamine hydrolysis. Inhibited by the product CTP, via allosteric rather than competitive inhibition. Catalyzes the ATP-dependent amination of UTP to CTP with either L-glutamine or ammonia as the source of nitrogen. Regulates intracellular CTP levels through interactions with the four ribonucleotide triphosphates. The polypeptide is CTP synthase (Burkholderia lata (strain ATCC 17760 / DSM 23089 / LMG 22485 / NCIMB 9086 / R18194 / 383)).